We begin with the raw amino-acid sequence, 206 residues long: Large ribosomal subunit protein uL4 (206 aa).

The interval 63 to 97 is disordered; the sequence is MYKQKGTGRARHHSARAPQFRGGGKAHGPVVRSHE. Residues 64–77 show a composition bias toward basic residues; the sequence is YKQKGTGRARHHSA.

It belongs to the universal ribosomal protein uL4 family. Part of the 50S ribosomal subunit.

Functionally, one of the primary rRNA binding proteins, this protein initially binds near the 5'-end of the 23S rRNA. It is important during the early stages of 50S assembly. It makes multiple contacts with different domains of the 23S rRNA in the assembled 50S subunit and ribosome. Its function is as follows. Forms part of the polypeptide exit tunnel. The protein is Large ribosomal subunit protein uL4 of Rhizobium rhizogenes (strain K84 / ATCC BAA-868) (Agrobacterium radiobacter).